The primary structure comprises 85 residues: MLTNQLNSESKNINKIGSIEEQVVSLTQRVKFISNHLKINKKDYSSQRGLRKILGKRKRLLTYLYKKDFLKYKFVIQSLGIRSLK.

It belongs to the universal ribosomal protein uS15 family. Part of the 30S ribosomal subunit.

Its subcellular location is the plastid. The protein localises to the chloroplast. The chain is Small ribosomal subunit protein uS15c (rps15) from Chaetosphaeridium globosum (Charophycean green alga).